The primary structure comprises 109 residues: Aquaporin-2 (109 aa).

Over 1-6 (SVAFSR) the chain is Cytoplasmic. Residues 7 to 27 (AVLAEFLATLIFVFFGLGSAL) traverse the membrane as a helical segment. Residues 28–35 (SWPQALPS) are Extracellular-facing. The helical transmembrane segment at 36-54 (VLQIALAFGLAIGTLVQAL) threads the bilayer. Over 55 to 59 (GHVSG) the chain is Cytoplasmic. The segment at residues 60–69 (AHINPAVTVA) is an intramembrane region (discontinuously helical). An NPA 1 motif is present at residues 63–65 (NPA). The Cytoplasmic segment spans residues 70–80 (CLVGCHVSFLR). Residues 81–102 (AAFYVAAQLLGAVAGAAILHEI) form a helical membrane-spanning segment. The Extracellular portion of the chain corresponds to 103-109 (TPPDVRG).

This sequence belongs to the MIP/aquaporin (TC 1.A.8) family. In terms of assembly, homotetramer. Post-translationally, serine phosphorylation is necessary and sufficient for expression at the apical membrane. Endocytosis is not phosphorylation-dependent. N-glycosylated.

Its subcellular location is the apical cell membrane. It is found in the basolateral cell membrane. It localises to the cell membrane. The protein localises to the cytoplasmic vesicle membrane. The protein resides in the golgi apparatus. Its subcellular location is the trans-Golgi network membrane. It carries out the reaction H2O(in) = H2O(out). The catalysed reaction is glycerol(in) = glycerol(out). In terms of biological role, forms a water-specific channel that provides the plasma membranes of renal collecting duct with high permeability to water, thereby permitting water to move in the direction of an osmotic gradient. Plays an essential role in renal water homeostasis. Could also be permeable to glycerol. The sequence is that of Aquaporin-2 from Dasypus novemcinctus (Nine-banded armadillo).